The sequence spans 872 residues: Alanine--tRNA ligase (872 aa).

Zn(2+) contacts are provided by H566, H570, C668, and H672.

This sequence belongs to the class-II aminoacyl-tRNA synthetase family. The cofactor is Zn(2+).

It is found in the cytoplasm. The catalysed reaction is tRNA(Ala) + L-alanine + ATP = L-alanyl-tRNA(Ala) + AMP + diphosphate. Its function is as follows. Catalyzes the attachment of alanine to tRNA(Ala) in a two-step reaction: alanine is first activated by ATP to form Ala-AMP and then transferred to the acceptor end of tRNA(Ala). Also edits incorrectly charged Ser-tRNA(Ala) and Gly-tRNA(Ala) via its editing domain. This Lactococcus lactis subsp. lactis (strain IL1403) (Streptococcus lactis) protein is Alanine--tRNA ligase.